Here is a 484-residue protein sequence, read N- to C-terminus: F-box/LRR-repeat protein At3g59210 (484 aa).

In terms of domain architecture, F-box spans 6–54 (KDIINCLPDNLLCQILSNLSTKEAALTSLLSKRWRYLFALVPNLDFDVL). LRR repeat units follow at residues 144 to 170 (KIGP…NLDS), 172 to 197 (VFEE…SLLN), 205 to 234 (SCSV…SFDT), 303 to 334 (TLYL…TIES), and 335 to 360 (HPEL…VFQG).

The protein is F-box/LRR-repeat protein At3g59210 of Arabidopsis thaliana (Mouse-ear cress).